The following is a 452-amino-acid chain: MSTTAWQKCLGLLQDEFSAQQFNTWLRPLQAYMDEQRLILLAPNRFVVDWVRKHFFSRIEELIKQFSGDDIKAISIEVGSKPVEAVDTPAETIVTSSSTAPLKSAPKKAVDYKSSHLNKKFVFDSFVEGNSNQLARAASMQVAERPGDAYNPLFIYGGVGLGKTHLMHAIGNSILKNNPEAKVLYLHSERFVADMVKALQTNSINEFKRFYRSLNALLIDDIQFFAGKDRSQEEFFHTFNALLEGQQQIILTSDRYPKEIEGMEERLKSRFGWGLTVAVEPPELETRVAILISKAEQSNIELPYEVAFFIAKRIRSNVRELEGALRRVIANAHFTGKPITIEFVHEALRDLLALQDKLVTIENIQKTVAEYYKVKVADLLSKRRSRSIARPRQMAMALSKELTNHSLPEIGDHFGGKDHTTVIHACRKVKELIQDDSDFAEDYKNLMRILSS.

Residues 1–85 (MSTTAWQKCL…IEVGSKPVEA (85 aa)) form a domain I, interacts with DnaA modulators region. The interval 85-115 (AVDTPAETIVTSSSTAPLKSAPKKAVDYKSS) is domain II. A domain III, AAA+ region region spans residues 116–332 (HLNKKFVFDS…GALRRVIANA (217 aa)). ATP is bound by residues glycine 160, glycine 162, lysine 163, and threonine 164. The interval 333-452 (HFTGKPITIE…YKNLMRILSS (120 aa)) is domain IV, binds dsDNA.

The protein belongs to the DnaA family. In terms of assembly, oligomerizes as a right-handed, spiral filament on DNA at oriC.

Its subcellular location is the cytoplasm. Functionally, plays an essential role in the initiation and regulation of chromosomal replication. ATP-DnaA binds to the origin of replication (oriC) to initiate formation of the DNA replication initiation complex once per cell cycle. Binds the DnaA box (a 9 base pair repeat at the origin) and separates the double-stranded (ds)DNA. Forms a right-handed helical filament on oriC DNA; dsDNA binds to the exterior of the filament while single-stranded (ss)DNA is stabiized in the filament's interior. The ATP-DnaA-oriC complex binds and stabilizes one strand of the AT-rich DNA unwinding element (DUE), permitting loading of DNA polymerase. After initiation quickly degrades to an ADP-DnaA complex that is not apt for DNA replication. Binds acidic phospholipids. The protein is Chromosomal replication initiator protein DnaA of Legionella pneumophila (strain Paris).